A 194-amino-acid polypeptide reads, in one-letter code: Putative manganese efflux pump MntP (194 aa).

6 consecutive transmembrane segments (helical) span residues 3 to 23 (PITILLIGIAMSTDAFAAAIG), 37 to 57 (LYVAVIFGVIETATPIAGWLL), 65 to 85 (IAAFDHWIAFGLLSGLGIHMI), 112 to 132 (LAATALATSIDAAAIGISLAF), 137 to 157 (IGIVAAVIGLCTFTMVIFGVM), and 170 to 190 (AEIVGGIILIIVGSTILYEHL).

Belongs to the MntP (TC 9.B.29) family.

The protein localises to the cell inner membrane. In terms of biological role, probably functions as a manganese efflux pump. The sequence is that of Putative manganese efflux pump MntP from Xylella fastidiosa (strain M12).